A 634-amino-acid chain; its full sequence is Probable LRR receptor-like serine/threonine-protein kinase At2g23950 (634 aa).

The signal sequence occupies residues 1–27; that stretch reads MVVMKLITMKIFSVLLLLCFFVTCSLS. Residues 28–236 are Extracellular-facing; that stretch reads SEPRNPEVEA…SSGRRTNILA (209 aa). 2 N-linked (GlcNAc...) asparagine glycosylation sites follow: N96 and N109. LRR repeat units follow at residues 99–121, 123–145, 147–167, and 171–193; these read NLRQ…ICSL, KLQT…VNQL, NLQY…ASLS, and HLSF…PART. Residue N155 is glycosylated (N-linked (GlcNAc...) asparagine). The helical transmembrane segment at 237–257 threads the bilayer; sequence VALGVSLGFAVSVILSLGFIW. Topologically, residues 258–634 are cytoplasmic; the sequence is YRKKQRRLTM…SFAMELSGPR (377 aa). T296 is subject to Phosphothreonine. The 256-residue stretch at 299-554 folds into the Protein kinase domain; sequence FSSKSILGAG…QVALLCTQFL (256 aa). An ATP-binding site is contributed by 305-313; that stretch reads LGAGGFGNV. Position 322 is a phosphothreonine (T322). K327 is an ATP binding site. Phosphoserine occurs at positions 380 and 383. The residue at position 395 (T395) is a Phosphothreonine. The Proton acceptor role is filled by D422. Phosphothreonine occurs at positions 455, 456, and 461. Y469 carries the phosphotyrosine modification. A Phosphoserine modification is found at S471. Phosphothreonine is present on T472. S476 carries the phosphoserine modification. T551 carries the post-translational modification Phosphothreonine.

Belongs to the protein kinase superfamily. Ser/Thr protein kinase family.

The protein resides in the membrane. It carries out the reaction L-seryl-[protein] + ATP = O-phospho-L-seryl-[protein] + ADP + H(+). The enzyme catalyses L-threonyl-[protein] + ATP = O-phospho-L-threonyl-[protein] + ADP + H(+). The sequence is that of Probable LRR receptor-like serine/threonine-protein kinase At2g23950 from Arabidopsis thaliana (Mouse-ear cress).